We begin with the raw amino-acid sequence, 365 residues long: DNA replication and repair protein RecF (365 aa).

30–37 is a binding site for ATP; it reads GLNAQGKT.

It belongs to the RecF family.

Its subcellular location is the cytoplasm. Its function is as follows. The RecF protein is involved in DNA metabolism; it is required for DNA replication and normal SOS inducibility. RecF binds preferentially to single-stranded, linear DNA. It also seems to bind ATP. In Chlamydia trachomatis serovar A (strain ATCC VR-571B / DSM 19440 / HAR-13), this protein is DNA replication and repair protein RecF.